The primary structure comprises 85 residues: Alpha-toxin Ac2 (85 aa).

An N-terminal signal peptide occupies residues 1 to 19; it reads MNYLVMISLALLFMTGVES. The region spanning 21-83 is the LCN-type CS-alpha/beta domain; sequence KDGYIVDDRN…VRTKGPGRCK (63 aa). Disulfide bonds link Cys-31-Cys-82, Cys-35-Cys-55, Cys-41-Cys-65, and Cys-45-Cys-67. Lys-83 carries the lysine amide modification.

It belongs to the long (4 C-C) scorpion toxin superfamily. Sodium channel inhibitor family. Alpha subfamily. Expressed by the venom gland.

Its subcellular location is the secreted. Its function is as follows. Alpha toxins bind voltage-independently at site-3 of sodium channels (Nav) and inhibit the inactivation of the activated channels, thereby blocking neuronal transmission. This chain is Alpha-toxin Ac2, found in Androctonus crassicauda (Arabian fat-tailed scorpion).